The following is a 358-amino-acid chain: Golgi-resident adenosine 3',5'-bisphosphate 3'-phosphatase (358 aa).

Met-1 carries the post-translational modification N-acetylmethionine. Residues 1 to 12 (MAPMGIRLSPLG) lie on the Cytoplasmic side of the membrane. The chain crosses the membrane as a helical span at residues 13–33 (VAVFCLLGLGVLYHLYSGFLA). Residues 34–358 (GRFSLFGLGG…KLPDLEKMGH (325 aa)) lie on the Lumenal side of the membrane. Positions 85 to 106 (RESNVLHEKSKGKTREGADDKM) are disordered. The active-site Proton acceptor is Asp-110. 4 residues coordinate Mg(2+): Glu-133, Asp-174, Leu-176, and Asp-177. Thr-179 (proton acceptor) is an active-site residue. 2 residues coordinate AMP: Ser-242 and His-245. N-linked (GlcNAc...) asparagine glycosylation occurs at Asn-259. Positions 268 and 272 each coordinate AMP. Mg(2+) is bound at residue Asp-300.

It belongs to the inositol monophosphatase superfamily. Mg(2+) is required as a cofactor. Post-translationally, contains N-linked glycan resistant to endoglycosydase H.

Its subcellular location is the golgi apparatus. The protein localises to the trans-Golgi network membrane. It carries out the reaction adenosine 3',5'-bisphosphate + H2O = AMP + phosphate. The protein operates within sulfur metabolism. With respect to regulation, strongly inhibited by lithium. Its function is as follows. Exhibits 3'-nucleotidase activity toward adenosine 3',5'-bisphosphate (PAP), namely hydrolyzes adenosine 3',5'-bisphosphate into adenosine 5'-monophosphate (AMP) and a phosphate. May play a role in the formation of skeletal elements derived through endochondral ossification, possibly by clearing adenosine 3',5'-bisphosphate produced by Golgi sulfotransferases during glycosaminoglycan sulfation. Has no activity toward 3'-phosphoadenosine 5'-phosphosulfate (PAPS) or inositol phosphate (IP) substrates including I(1)P, I(1,4)P2, I(1,3,4)P3, I(1,4,5)P3 and I(1,3,4,5)P4. This is Golgi-resident adenosine 3',5'-bisphosphate 3'-phosphatase (BPNT2) from Callithrix jacchus (White-tufted-ear marmoset).